The following is a 324-amino-acid chain: Ribose 1,5-bisphosphate isomerase (324 aa).

Substrate-binding positions include 22 to 25 (RGAG) and Arg-65. Catalysis depends on Cys-135, which acts as the Proton acceptor. Residue 137–139 (SKA) coordinates substrate. Catalysis depends on Asp-204, which acts as the Proton donor. Lys-240 is a binding site for substrate.

Belongs to the eIF-2B alpha/beta/delta subunits family. R15P isomerase subfamily.

The enzyme catalyses alpha-D-ribose 1,5-bisphosphate = D-ribulose 1,5-bisphosphate. Its function is as follows. Catalyzes the isomerization of ribose 1,5-bisphosphate (R15P) to ribulose 1,5-bisphosphate (RuBP), the CO(2) acceptor and substrate for RubisCO. Functions in an archaeal AMP degradation pathway, together with AMP phosphorylase and RubisCO. This chain is Ribose 1,5-bisphosphate isomerase, found in Pyrococcus furiosus (strain ATCC 43587 / DSM 3638 / JCM 8422 / Vc1).